The sequence spans 427 residues: Alpha/beta hydrolase gkaG (427 aa).

The active site involves Asp368.

The protein belongs to the AB hydrolase superfamily. In terms of assembly, homodimer.

It functions in the pathway mycotoxin biosynthesis. Functionally, alpha/beta hydrolase; part of the gene cluster that mediates the biosynthesis of GKK1032, fungal natural products containing a macrocyclic para-cyclophane connected to a decahydrofluorene ring system that show potent antitumor activities. Within the pathway, gkaG catalyzes the Knoevenagel condensation that affords the 3-pyrrolin-2-one ring, using as substrate the polyketide-tyrosyl acyl thioester product of gkaA. The pathway begins with the PKS-NRPS gkaA which, with the help of the trans-enoyl reductase gkaC, synthesizes the polyketide-tyrosyl acyl thioester product which can be reductively off-loaded by the terminal reductase (R) domain in gkaA. The alpha/beta hydrolase gkaG is then required to catalyze the subsequent Knoevenagel condensation that affords the 3-pyrrolin-2-one ring, whereas the three proteins gkaB, gkaX and gkaZ then function synergistically to form the cyclophane. The protein is Alpha/beta hydrolase gkaG of Penicillium citrinum.